The sequence spans 248 residues: Cytochrome c oxidase subunit 2 (248 aa).

The N-terminal stretch at 1–12 is a signal peptide; it reads MLLMNLFTIINN. Residues 13–39 lie on the Mitochondrial intermembrane side of the membrane; the sequence is DVPTPYNMYFQDSTTPHQEGILELHDN. Residues 40 to 61 form a helical membrane-spanning segment; the sequence is IMFYMLTVLGLVSWMMIIIIKD. Residues 62-79 are Mitochondrial matrix-facing; that stretch reads YKNNPITYKYIKHGQMIE. A helical membrane pass occupies residues 80-104; that stretch reads IIWTILPAIILLMIAFPSFILLYLC. The Mitochondrial intermembrane portion of the chain corresponds to 105–248; the sequence is DEVISPAMTI…PTFLTWLNEQ (144 aa). Cu cation is bound by residues His-183, Cys-218, Glu-220, Cys-222, His-226, and Met-229. Glu-220 is a Mg(2+) binding site.

The protein belongs to the cytochrome c oxidase subunit 2 family. In terms of assembly, component of the cytochrome c oxidase (complex IV, CIV), a multisubunit enzyme composed of a catalytic core of 3 subunits and several supernumerary subunits. The complex exists as a monomer or a dimer and forms supercomplexes (SCs) in the inner mitochondrial membrane with ubiquinol-cytochrome c oxidoreductase (cytochrome b-c1 complex, complex III, CIII). Cu cation is required as a cofactor. In terms of processing, the signal sequence of COX2 is processed by IMP1.

It localises to the mitochondrion inner membrane. The enzyme catalyses 4 Fe(II)-[cytochrome c] + O2 + 8 H(+)(in) = 4 Fe(III)-[cytochrome c] + 2 H2O + 4 H(+)(out). In terms of biological role, component of the cytochrome c oxidase, the last enzyme in the mitochondrial electron transport chain which drives oxidative phosphorylation. The respiratory chain contains 3 multisubunit complexes succinate dehydrogenase (complex II, CII), ubiquinol-cytochrome c oxidoreductase (cytochrome b-c1 complex, complex III, CIII) and cytochrome c oxidase (complex IV, CIV), that cooperate to transfer electrons derived from NADH and succinate to molecular oxygen, creating an electrochemical gradient over the inner membrane that drives transmembrane transport and the ATP synthase. Cytochrome c oxidase is the component of the respiratory chain that catalyzes the reduction of oxygen to water. Electrons originating from reduced cytochrome c in the intermembrane space (IMS) are transferred via the dinuclear copper A center (CU(A)) of subunit 2 and heme A of subunit 1 to the active site in subunit 1, a binuclear center (BNC) formed by heme A3 and copper B (CU(B)). The BNC reduces molecular oxygen to 2 water molecules using 4 electrons from cytochrome c in the IMS and 4 protons from the mitochondrial matrix. In Eremothecium gossypii (strain ATCC 10895 / CBS 109.51 / FGSC 9923 / NRRL Y-1056) (Yeast), this protein is Cytochrome c oxidase subunit 2 (COX2).